A 189-amino-acid polypeptide reads, in one-letter code: Phomopsin biosynthesis cluster protein C' (189 aa).

The protein belongs to the oryJ family.

Part of the gene cluster that mediates the biosynthesis of the phomopsins, a group of hexapeptide mycotoxins which infects lupins and causes lupinosis disease in livestock. The role of phomC' within the phomopsins biosynthesis pathway has still to be determined. The pathway starts with the processing of the precursor phomA by several endopeptidases including kexin proteases as well as the cluster-specific S41 family peptidase phomP1 and the oligopeptidase phomG to produce 10 identical copies of the hexapeptide Tyr-Val-Ile-Pro-Ile-Asp. After being excised from the precursor peptide, the core peptides are cyclized and modified post-translationally by enzymes encoded within the gene cluster. The timing and order of proteolysis of the phomA precursor and PTMs are still unknown. Two tyrosinase-like enzymes, phomQ1 and phomQ2, catalyze the chlorination and hydroxylation of Tyr, respectively. PhomYb, is proposed to be involved in the construction of the macrocyclic structure. The other 4 ustYa family proteins may be involved in PTMs that generate the unique structure of phomopsin A. PhomYa is required for the hydroxylation of C-beta of Tyr. PhomYc, phomYd, and phomYe are responsible for the biosynthesis of 2,3-dehydroisoleucine (dIle), 2,3-dehydroaspartic acid (dAsp), and 3,4-dehydroproline (dPro), respectively. While dIle formation by phomYc is indispensable for the installation of dAsp by phomYd, the order of the other PTMs have not been elucidated yet. Most of the biosynthetic enzymes likely have broad substrate specificity, and thus, there might be a metabolic grid from a precursor to phomopsin A. The enzyme(s) responsible for the biosynthesis of 3,4-dehydrovaline (dVal) have also not been identified yet. Finally, phomM acts as an S-adenosylmethionine-dependent alpha-N-methyltransferase that catalyzes two successive N-methylation reactions, converting N-desmethyl-phomopsin A to phomopsin A and phomopsin A further to an N,N-dimethylated congener called phomopsin E. The sequence is that of Phomopsin biosynthesis cluster protein C' from Diaporthe leptostromiformis (Lupinosis disease fungus).